The following is a 372-amino-acid chain: Chaperone protein DnaJ (372 aa).

Residues 5–70 (DYYDVLGVER…QKRANYDQYG (66 aa)) enclose the J domain. Residues 130–208 (GTTKDIQINT…CHGDGRVHKK (79 aa)) form a CR-type zinc finger. The Zn(2+) site is built by Cys143, Cys146, Cys160, Cys163, Cys182, Cys185, Cys196, and Cys199. CXXCXGXG motif repeat units lie at residues 143–150 (CDSCDGSG), 160–167 (CSTCHGAG), 182–189 (CPSCHGSG), and 196–203 (CKSCHGDG).

It belongs to the DnaJ family. In terms of assembly, homodimer. Zn(2+) serves as cofactor.

Its subcellular location is the cytoplasm. Its function is as follows. Participates actively in the response to hyperosmotic and heat shock by preventing the aggregation of stress-denatured proteins and by disaggregating proteins, also in an autonomous, DnaK-independent fashion. Unfolded proteins bind initially to DnaJ; upon interaction with the DnaJ-bound protein, DnaK hydrolyzes its bound ATP, resulting in the formation of a stable complex. GrpE releases ADP from DnaK; ATP binding to DnaK triggers the release of the substrate protein, thus completing the reaction cycle. Several rounds of ATP-dependent interactions between DnaJ, DnaK and GrpE are required for fully efficient folding. Also involved, together with DnaK and GrpE, in the DNA replication of plasmids through activation of initiation proteins. The protein is Chaperone protein DnaJ of Pasteurella multocida (strain Pm70).